A 245-amino-acid polypeptide reads, in one-letter code: Superoxide dismutase 1 copper chaperone (245 aa).

Positions 8–71 constitute an HMA domain; that stretch reads DFEATYAVEM…ALKNCGRDGI (64 aa). Residues Cys19 and Cys22 each coordinate Cu cation. The cysteines at positions 29 and 66 are disulfide-linked. Residues Cys224 and Cys226 each coordinate Cu cation.

It belongs to the CCS1 family. Cu(2+) is required as a cofactor.

It localises to the cytoplasm. Functionally, copper chaperone for superoxide dismutase 1 (SOD1). Binds copper ions and delivers them specifically to SOD1. The chain is Superoxide dismutase 1 copper chaperone (CCS1) from Kluyveromyces lactis (strain ATCC 8585 / CBS 2359 / DSM 70799 / NBRC 1267 / NRRL Y-1140 / WM37) (Yeast).